Consider the following 488-residue polypeptide: Ribulose bisphosphate carboxylase large chain (488 aa).

Substrate-binding residues include Asn127 and Thr177. Residue Lys179 is the Proton acceptor of the active site. Residue Lys181 coordinates substrate. Mg(2+)-binding residues include Lys205, Asp207, and Glu208. Residue Lys205 is modified to N6-carboxylysine. The active-site Proton acceptor is His297. 3 residues coordinate substrate: Arg298, His330, and Ser382.

The protein belongs to the RuBisCO large chain family. Type I subfamily. Heterohexadecamer of 8 large chains and 8 small chains. Requires Mg(2+) as cofactor.

It is found in the plastid. The protein resides in the chloroplast. It catalyses the reaction 2 (2R)-3-phosphoglycerate + 2 H(+) = D-ribulose 1,5-bisphosphate + CO2 + H2O. It carries out the reaction D-ribulose 1,5-bisphosphate + O2 = 2-phosphoglycolate + (2R)-3-phosphoglycerate + 2 H(+). In terms of biological role, ruBisCO catalyzes two reactions: the carboxylation of D-ribulose 1,5-bisphosphate, the primary event in carbon dioxide fixation, as well as the oxidative fragmentation of the pentose substrate in the photorespiration process. Both reactions occur simultaneously and in competition at the same active site. The polypeptide is Ribulose bisphosphate carboxylase large chain (Rhodomonas salina (Cryptomonas salina)).